Reading from the N-terminus, the 305-residue chain is MELHSLSKRNSPVDPCNALEWSSGETSGDHIEEATIRDAFCYQKNLVSTPRADVVEVCRLSTSPASPTSLLQDSAIQTSFSLSGPPDSGNNQVMADRKVCNCCSQELETSFTYVDENVNLEQRSQRSPSAKGSNHPVDLGWGNPNEWSHETAMSLMSEDDDDTSSEATSSGKSVDYGFISAILFLVTGILLVIISYIVPREVTVDPNTVAAREMERLEKESAMLGAHLDRCVIAGLCLLTLGGVVLSCLLMMSMWKGELYRRNRFASSKESAKLYGSFNFRMKTSTNEDTLELSLVEEDALAVQS.

A Phosphoserine modification is found at S11. Over residues 122 to 132 (QRSQRSPSAKG) the composition is skewed to polar residues. A disordered region spans residues 122–143 (QRSQRSPSAKGSNHPVDLGWGN). Transmembrane regions (helical) follow at residues 178 to 198 (FISA…SYIV) and 232 to 252 (VIAG…LLMM).

Belongs to the TMEM74 family.

Its subcellular location is the lysosome membrane. It localises to the cytoplasmic vesicle. It is found in the autophagosome membrane. Plays an essential role in autophagy. TMEM74-induced autophagy may involve PI3K signal transduction. The chain is Transmembrane protein 74 (Tmem74) from Mus musculus (Mouse).